We begin with the raw amino-acid sequence, 139 residues long: Small capsomere-interacting protein (139 aa).

Over residues 100–120 (SLTTPSLSSTPTSLTSMPGLS) the composition is skewed to low complexity. Positions 100 to 139 (SLTTPSLSSTPTSLTSMPGLSISGPSTTDTIDSKKKPKAK) are disordered.

The protein belongs to the herpesviridae small capsomere-interacting protein family. Interacts with the major capsid protein/MCP.

It localises to the virion. Its subcellular location is the host nucleus. Participates in the assembly of the infectious particles by decorating the outer surface of the capsid shell and thus forming a layer between the capsid and the tegument. Complexes composed of the major capsid protein and small capsomere-interacting protein/SCP assemble together in the host cytoplasm and are translocated to the nucleus, where they accumulate and participate in capsid assembly. This Saimiri sciureus (Common squirrel monkey) protein is Small capsomere-interacting protein.